The chain runs to 194 residues: Ribosome maturation factor RimP (194 aa).

The protein belongs to the RimP family.

The protein localises to the cytoplasm. Its function is as follows. Required for maturation of 30S ribosomal subunits. In Jannaschia sp. (strain CCS1), this protein is Ribosome maturation factor RimP.